Consider the following 134-residue polypeptide: MSFLKNQLSRLLALILVVAIGLTACDSGTGLTGNYSQDTLTVIATLREAIDLPQDAPNRQEVQDTARGQINDYISRYRRKGDAGGLKSFTTMQTALNSLAGYYTSYGARPIPEKLKKRLQLEFTQAERSIERGV.

Residues 1 to 24 (MSFLKNQLSRLLALILVVAIGLTA) form the signal peptide. C25 carries the N-palmitoyl cysteine lipid modification. Residue C25 is the site of S-diacylglycerol cysteine attachment.

Belongs to the Psb27 family. Monomer. Forms a complex with a monomeric, partially assembled PSII. This is probably the complex in which D1 is assembled and/or replaced. Present in 6-10% of PSII complexes; mostly in monomeric PSII. These PSII do not evolve oxygen, do not have an assembled calcium-manganese-oxide cluster. Psb27-containing PSII seem to be assembly intermediates; a wild-type strain includes the intrinsic membrane proteins, Psb27, Pbs28, substoichiometric amounts of PsbO and PsbQ but no PsbU or PsbV, while a ctpA deletion mutant includes the intrinsic membrane proteins (D1 as precursor), Psb27, a very low amount of PsbO and PsbQ, but no PsbU or PsbV. Small amounts of Psb27 interact with the lumenal domain of CP43 (psbC) in wild-type and a ctpA mutant. A small amount can also be detected in monomeric and trimeric photosystem I (PSI), possibly via association with PsaB.

It localises to the cellular thylakoid membrane. Plays a role in the repair and/or biogenesis of the calcium-manganese-oxide cluster on the lumenal face of the thylakoid membrane. Photosystem II (PSII) complexes containing this protein are monomeric, are assembly intermediates lacking the calcium-manganese-oxide cluster and miss some of the lumenal subunits. Probably blocks binding of some of the small lumenal subunits. This Synechocystis sp. (strain ATCC 27184 / PCC 6803 / Kazusa) protein is Photosystem II lipoprotein Psb27.